Reading from the N-terminus, the 118-residue chain is Putative ankyrin repeat protein R747 (118 aa).

The ANK repeat unit spans residues 70 to 99 (NCYYLLDYAIMKNDIPVIVTLIEKGANINR).

The protein is Putative ankyrin repeat protein R747 of Acanthamoeba polyphaga (Amoeba).